The sequence spans 343 residues: tRNA N6-adenosine threonylcarbamoyltransferase (343 aa).

Fe cation contacts are provided by His-108 and His-112. Residues 129-133 (LISGG), Asp-161, Glu-178, and Ser-258 contribute to the substrate site. Asp-286 is a Fe cation binding site.

The protein belongs to the KAE1 / TsaD family. Requires Fe(2+) as cofactor.

The protein resides in the cytoplasm. The catalysed reaction is L-threonylcarbamoyladenylate + adenosine(37) in tRNA = N(6)-L-threonylcarbamoyladenosine(37) in tRNA + AMP + H(+). In terms of biological role, required for the formation of a threonylcarbamoyl group on adenosine at position 37 (t(6)A37) in tRNAs that read codons beginning with adenine. Is probably involved in the transfer of the threonylcarbamoyl moiety of threonylcarbamoyl-AMP (TC-AMP) to the N6 group of A37. The protein is tRNA N6-adenosine threonylcarbamoyltransferase of Pyrobaculum aerophilum (strain ATCC 51768 / DSM 7523 / JCM 9630 / CIP 104966 / NBRC 100827 / IM2).